Here is a 190-residue protein sequence, read N- to C-terminus: Elongation factor P (190 aa).

It belongs to the elongation factor P family.

Its subcellular location is the cytoplasm. It functions in the pathway protein biosynthesis; polypeptide chain elongation. Its function is as follows. Involved in peptide bond synthesis. Stimulates efficient translation and peptide-bond synthesis on native or reconstituted 70S ribosomes in vitro. Probably functions indirectly by altering the affinity of the ribosome for aminoacyl-tRNA, thus increasing their reactivity as acceptors for peptidyl transferase. The protein is Elongation factor P of Pseudomonas fluorescens (strain SBW25).